The primary structure comprises 613 residues: Histone acetyltransferase KAT7 (613 aa).

The interval 1-175 is disordered; it reads MAIGVVKRNA…SDLSHRPKRR (175 aa). 5 positions are modified to phosphoserine: Ser-12, Ser-52, Ser-55, Ser-59, and Ser-66. Positions 44 to 59 are enriched in low complexity; sequence VTRSSARLSQSSQDSS. Residues Thr-87 and Thr-90 each carry the phosphothreonine modification. The segment covering 98-107 has biased composition (polar residues); that stretch reads QTRSSGSETE. Ser-104 is modified (phosphoserine). A Phosphothreonine modification is found at Thr-106. The span at 112 to 127 shows a compositional bias: basic and acidic residues; that stretch reads FSDRETKNTADHDESP. Phosphoserine occurs at positions 113 and 126. Thr-130 carries the post-translational modification Phosphothreonine. Residues 136–147 are compositionally biased toward low complexity; it reads PSSESDIDISSP. Residues 150–170 are compositionally biased toward basic and acidic residues; it reads SHDESIAKDMSLKDSGSDLSH. A phosphoserine mark is found at Ser-160, Ser-164, Ser-166, and Ser-180. Residues 178 to 221 form a CCHHC-type zinc finger; that stretch reads HESYNFNMKCPTPGCNSLGHLTGKHERHFSISGCPLYHNLSADE. N6-acetyllysine occurs at positions 201 and 279. A Glycyl lysine isopeptide (Lys-Gly) (interchain with G-Cter in SUMO2) cross-link involves residue Lys-325. Residues 334-609 form the MYST-type HAT domain; sequence EGSNMIKTIA…MDPSCLKWTP (276 aa). Lys-340 participates in a covalent cross-link: Glycyl lysine isopeptide (Lys-Gly) (interchain with G-Cter in ubiquitin). The segment at 367–392 adopts a C2HC MYST-type zinc-finger fold; it reads LYMCEFCLKYMKSQTILRRHMAKCVW. Zn(2+) is bound by residues Cys-370, Cys-373, His-386, and Cys-390. Residue Lys-434 is modified to N6-acetyllysine; by autocatalysis. Residues 477–479 and 485–490 contribute to the acetyl-CoA site; these read ILT and RQGYGK. The residue at position 508 (Ser-508) is a Phosphoserine. Glu-510 serves as the catalytic Proton donor/acceptor. Acetyl-CoA-binding residues include Ser-514 and Ser-523.

This sequence belongs to the MYST (SAS/MOZ) family. As to quaternary structure, component of the HBO1 complex composed of KAT7/HBO1, MEAF6, ING4 or ING5, and one scaffold subunit: complexes containing BRPF scaffold (BRPF1, BRD1/BRPF2 or BRPF3) direct KAT7/HBO1 specificity towards H3K14ac, while complexes containing JADE scaffold (JADE1, JADE2 and JADE3) mediate acetylation of histone H4. Interacts with MCM2 and ORC1. Interacts with the androgen receptor (AR) in the presence of dihydrotestosterone. Interacts with CDT1. Interacts with MAP2K1 and CUL1. Interacts with p53/TP53; leading to inhibit histone acetyltransferase activity. Post-translationally, phosphorylated at Ser-52 and Ser-55 by ATR in response to DNA damage, promoting its ubiquitination by the CRL4(DDB2) complex and subsequent degradation. Phosphorylation at Ser-52 and Ser-55 by ATR in response to ultraviolet-induced DNA, promotes localization to DNA damage sites. Phosphorylation at Ser-59 by PLK1 during mitosis seems important for prereplicative complex formation and DNA replication licensing, and requires prior phosphorylation at Thr-87 and Thr-90 by CDK1. Phosphorylated by MAP2K1, which accelerates its degradation. In terms of processing, ubiquitinated at Lys-340, leading to proteasomal degradation. Ubiquitinated by the CRL4(DDB2) complex following phosphorylation by ATR, leading to its subsequent degradation. Autoacetylation at Lys-434 is required for proper function. In terms of tissue distribution, widely expressed in adult tissues.

It is found in the nucleus. The protein resides in the chromosome. It localises to the centromere. The protein localises to the cytoplasm. Its subcellular location is the cytosol. It catalyses the reaction L-lysyl-[protein] + acetyl-CoA = N(6)-acetyl-L-lysyl-[protein] + CoA + H(+). With respect to regulation, histone acetyltransferase activity is inhibited by GMNN in the context of a complex with CDT1, inhibiting histone H4 acetylation and DNA replication licensing. Functionally, catalytic subunit of histone acetyltransferase HBO1 complexes, which specifically mediate acetylation of histone H3 at 'Lys-14' (H3K14ac), thereby regulating various processes, such as gene transcription, protein ubiquitination, immune regulation, stem cell pluripotent and self-renewal maintenance and embryonic development. Some complexes also catalyze acetylation of histone H4 at 'Lys-5', 'Lys-8' and 'Lys-12' (H4K5ac, H4K8ac and H4K12ac, respectively), regulating DNA replication initiation, regulating DNA replication initiation. Specificity of the HBO1 complexes is determined by the scaffold subunit: complexes containing BRPF scaffold (BRPF1, BRD1/BRPF2 or BRPF3) direct KAT7/HBO1 specificity towards H3K14ac, while complexes containing JADE (JADE1, JADE2 and JADE3) scaffold direct KAT7/HBO1 specificity towards histone H4. H3K14ac promotes transcriptional elongation by facilitating the processivity of RNA polymerase II. Acts as a key regulator of hematopoiesis by forming a complex with BRD1/BRPF2, directing KAT7/HBO1 specificity towards H3K14ac and promoting erythroid differentiation. H3K14ac is also required for T-cell development. KAT7/HBO1-mediated acetylation facilitates two consecutive steps, licensing and activation, in DNA replication initiation: H3K14ac facilitates the activation of replication origins, and histone H4 acetylation (H4K5ac, H4K8ac and H4K12ac) facilitates chromatin loading of MCM complexes, promoting DNA replication licensing. Acts as a positive regulator of centromeric CENPA assembly: recruited to centromeres and mediates histone acetylation, thereby preventing centromere inactivation mediated by SUV39H1, possibly by increasing histone turnover/exchange. Involved in nucleotide excision repair: phosphorylation by ATR in response to ultraviolet irradiation promotes its localization to DNA damage sites, where it mediates histone acetylation to facilitate recruitment of XPC at the damaged DNA sites. Acts as an inhibitor of NF-kappa-B independently of its histone acetyltransferase activity. Plays a central role in the maintenance of leukemia stem cells in acute myeloid leukemia (AML). Acts by mediating acetylation of histone H3 at 'Lys-14' (H3K14ac), thereby facilitating the processivity of RNA polymerase II to maintain the high expression of key genes, such as HOXA9 and HOXA10 that help to sustain the functional properties of leukemia stem cells. The polypeptide is Histone acetyltransferase KAT7 (Mus musculus (Mouse)).